The primary structure comprises 93 residues: YcgL domain-containing protein PSHAb0508 (93 aa).

One can recognise a YcgL domain in the interval 1-85 (MLTAVYKSKK…PQENLLSQLR (85 aa)).

The sequence is that of YcgL domain-containing protein PSHAb0508 from Pseudoalteromonas translucida (strain TAC 125).